The chain runs to 1150 residues: RNA polymerase-associated protein CTR9 (1150 aa).

TPR repeat units lie at residues 143-176 (VRAW…NPKN), 177-210 (VLPL…CRHT), 212-245 (ADLR…EPYN), 247-282 (SAMC…QTDH), 320-353 (AEAF…NNGE), 355-388 (TLAH…LPNN), 432-464 (YEAC…LVTN), 471-504 (PEML…LEEQ), 594-627 (PIVW…IFNN), 643-677 (FEQL…QPKN), 679-711 (YAAN…TSEF), 712-745 (YDVW…FRKE), and 748-781 (STLQ…QLDN). Coiled coils occupy residues 848–916 (AEEA…NLRL) and 972–1028 (ERRE…AKQS). A disordered region spans residues 935 to 1150 (KRRGGGGRKR…KKKVIESDSD (216 aa)). Over residues 975 to 992 (ERRKKDKAAKKASRKKRE) the composition is skewed to basic residues. Composition is skewed to basic and acidic residues over residues 993 to 1005 (RRDS…NRRD), 1013 to 1024 (EERDRKLQEKLS), 1060 to 1084 (DPRP…ETTT), and 1132 to 1150 (RDSD…SDSD).

Component of the PAF1 complex which consists of at least cdc-73, ctr-9, leo-1, pafo-1 and rtfo-1.

The protein resides in the nucleus. Component of the PAF1 complex which is a multifunctional complex involved in transcription initiation via genetic interactions with TATA-binding proteins, elongation and transcription-coupled histone modification. Ctr-9 is required for epidermal microtubule organization during morphogenesis. The protein is RNA polymerase-associated protein CTR9 of Caenorhabditis elegans.